The following is an 885-amino-acid chain: DNA mismatch repair protein MutS (885 aa).

626–633 (GPNMGGKS) serves as a coordination point for ATP.

It belongs to the DNA mismatch repair MutS family.

Functionally, this protein is involved in the repair of mismatches in DNA. It is possible that it carries out the mismatch recognition step. This protein has a weak ATPase activity. The polypeptide is DNA mismatch repair protein MutS (Burkholderia orbicola (strain MC0-3)).